The chain runs to 427 residues: GTPase Obg (427 aa).

An Obg domain is found at 1-158 (MFVDIAKIYV…LWVILELKVL (158 aa)). Residues 159–330 (ADVGLIGYPN…VLKRAYELLK (172 aa)) form the OBG-type G domain. GTP-binding positions include 165–172 (GYPNVGKS), 190–194 (FTTKY), 212–215 (DIPG), 282–285 (NKMD), and 311–313 (SAA). Mg(2+) contacts are provided by S172 and T192. The OCT domain maps to 347–427 (FVYYKKKDVK…ILDVEFEYYE (81 aa)).

Belongs to the TRAFAC class OBG-HflX-like GTPase superfamily. OBG GTPase family. In terms of assembly, monomer. Mg(2+) serves as cofactor.

The protein localises to the cytoplasm. Functionally, an essential GTPase which binds GTP, GDP and possibly (p)ppGpp with moderate affinity, with high nucleotide exchange rates and a fairly low GTP hydrolysis rate. Plays a role in control of the cell cycle, stress response, ribosome biogenesis and in those bacteria that undergo differentiation, in morphogenesis control. The sequence is that of GTPase Obg from Caldicellulosiruptor bescii (strain ATCC BAA-1888 / DSM 6725 / KCTC 15123 / Z-1320) (Anaerocellum thermophilum).